We begin with the raw amino-acid sequence, 748 residues long: Structure-specific endonuclease subunit SLX4 (748 aa).

A compositionally biased stretch (polar residues) spans 62 to 75; sequence KSVTAQKSPMTQET. The disordered stretch occupies residues 62 to 104; it reads KSVTAQKSPMTQETTKNDTERNKDVDKSCNPVSTSHPDLGGSN. Threonine 72 carries the phosphothreonine; by ATR and ATM modification. The span at 76–88 shows a compositional bias: basic and acidic residues; it reads TKNDTERNKDVDK. Threonine 113 carries the phosphothreonine; by ATR and ATM modification. Disordered regions lie at residues 215–236 and 277–303; these read IKTQNEGNSDKPPRARNNKGEK and EKSSNSLDNQESSQQRLWTASQLPPEL. Over residues 222-236 the composition is skewed to basic and acidic residues; the sequence is NSDKPPRARNNKGEK. Positions 277 to 298 are enriched in polar residues; it reads EKSSNSLDNQESSQQRLWTASQ. Position 289 is a phosphoserine; by ATR and ATM (serine 289). Threonine 319 carries the phosphothreonine; by ATR and ATM modification. 2 positions are modified to phosphoserine; by ATR and ATM: serine 329 and serine 355. Residues 591–602 are compositionally biased toward polar residues; the sequence is ISTKDSTQNPTT. The disordered stretch occupies residues 591 to 610; that stretch reads ISTKDSTQNPTTSNDIIDTS.

It belongs to the SLX4 family. Forms a heterodimer with SLX1. Interacts with RAD1; catalytic subunit of the RAD1-RAD10 endonuclease. Interacts with RTT107. Phosphorylated by ATR (MEC1) and ATM (TEL1) upon DNA damage. This appears to be required for the function with the RAD1-RAD10 endonuclease.

It is found in the nucleus. The protein resides in the cytoplasm. Its function is as follows. Regulatory subunit that interacts with and increases the activity of different structure-specific endonucleases. Has several distinct roles in protecting genome stability by resolving diverse forms of deleterious DNA structures. Component of the SLX1-SLX4 structure-specific endonuclease that resolves DNA secondary structures generated during DNA repair and recombination. Has endonuclease activity towards branched DNA substrates, introducing single-strand cuts in duplex DNA close to junctions with ss-DNA. Has a preference for simple Y, 5'-flap and replication fork-like structures. It cleaves the strand bearing the 5'-non-homologous arm at the branch site junction and generates ligatable, nicked products from the 5'-flap or replication fork substrates. Plays a critical role in maintaining the integrity of the ribosomal DNA (rDNA) loci, where it has a role in re-starting stalled replication forks. Has Holliday junction resolvase activity in vitro. Interacts with the structure-specific RAD1-RAD10 endonuclease and promotes RAD1-RAD10-dependent 3'-non-homologous tail removal (NHTR) during repair of double-strand breaks by single-strand annealing. SLX4 also promotes recovery from DNA-alkylation-induced replisome stalling during DNA replication by facilitating the error-free mode of lesion bypass. This does not require SLX1 or RAD1-RAD10, but probably RTT107. The sequence is that of Structure-specific endonuclease subunit SLX4 from Saccharomyces cerevisiae (strain RM11-1a) (Baker's yeast).